Reading from the N-terminus, the 132-residue chain is Large ribosomal subunit protein uL14 (132 aa).

Belongs to the universal ribosomal protein uL14 family. Part of the 50S ribosomal subunit. Forms a cluster with proteins L3 and L24e, part of which may contact the 16S rRNA in 2 intersubunit bridges.

Its function is as follows. Binds to 23S rRNA. Forms part of two intersubunit bridges in the 70S ribosome. The chain is Large ribosomal subunit protein uL14 from Halorubrum lacusprofundi (strain ATCC 49239 / DSM 5036 / JCM 8891 / ACAM 34).